Consider the following 247-residue polypeptide: NAD-dependent protein deacetylase (247 aa).

One can recognise a Deacetylase sirtuin-type domain in the interval 1 to 247; the sequence is MDTRKNLKEL…LGGIVEELGY (247 aa). Positions 23, 27, 34, 35, 104, 106, 107, and 122 each coordinate NAD(+). A nicotinamide-binding site is contributed by phenylalanine 34. The nicotinamide site is built by isoleucine 106 and aspartate 107. Histidine 122 serves as the catalytic Proton acceptor. The Zn(2+) site is built by cysteine 130, cysteine 133, cysteine 152, and cysteine 155. Positions 193, 194, 216, and 234 each coordinate NAD(+).

Belongs to the sirtuin family. Class U subfamily. The cofactor is Zn(2+).

It localises to the cytoplasm. The catalysed reaction is N(6)-acetyl-L-lysyl-[protein] + NAD(+) + H2O = 2''-O-acetyl-ADP-D-ribose + nicotinamide + L-lysyl-[protein]. Functionally, NAD-dependent protein deacetylase which modulates the activities of several enzymes which are inactive in their acetylated form. In Clostridium tetani (strain Massachusetts / E88), this protein is NAD-dependent protein deacetylase.